Reading from the N-terminus, the 269-residue chain is Protein CURLY FLAG LEAF 1 (269 aa).

The segment at 17–44 (SLNGGGGGGGGRRRGRRAAAAEGSDDSE) is disordered. The EAR signature appears at 47–52 (TVELNS). The region spanning 54–88 (VALPYHWEQCLDIRTGQVYYINWEDGTRTTIDPRS) is the WW domain. Disordered regions lie at residues 83-133 (TIDP…SGYT) and 174-218 (GDDE…SGAG). Low complexity-rich tracts occupy residues 87-106 (RSSS…SSSR), 121-133 (AAAA…SGYT), and 180-202 (SSSS…AVSS). Over residues 203–212 (TLSSFSPTDE) the composition is skewed to polar residues.

Binds to HDG1.

Negatively regulates the cuticle development probably by interacting with the HD-ZIP IV transcription factor HDG1. The protein is Protein CURLY FLAG LEAF 1 of Oryza sativa subsp. indica (Rice).